Here is a 327-residue protein sequence, read N- to C-terminus: Leucotoxin LukDv (327 aa).

The signal sequence occupies residues 1–26 (MKMKKLVKSSVASSIALLLLSNTVDA).

The protein belongs to the aerolysin family. In terms of assembly, toxicity requires sequential binding and synergistic association of a class S and a class F component which form heterooligomeric complexes. LukEv (class S) associates with LukDv (class F).

Its subcellular location is the secreted. Its function is as follows. Part of a bi-component leucotoxin that acts by forming pores in the membrane of the target cells. The activity of LukEv-LukDv to rabbit leukocytes is similar to that of the Panton-Valentine leucocidin (PVL). LukEv-LukDv is hemolytic to rabbit red blood cells although the activity is only 8% of gamma-hemolysin. This chain is Leucotoxin LukDv (lukDv), found in Staphylococcus aureus (strain NCTC 8325 / PS 47).